Here is a 507-residue protein sequence, read N- to C-terminus: Transcription factor SOX-9 (507 aa).

Disordered regions lie at residues 1 to 67 (MNLL…SEED) and 160 to 250 (RLRV…AGKV). Low complexity predominate over residues 30-41 (SAGSPCPSGSGS). The segment covering 42 to 52 (DTENTRPQENT) has biased composition (polar residues). Basic and acidic residues-rich tracts occupy residues 56–67 (GEPDLKKESEED) and 160–174 (RLRV…DYKY). Residues 63-103 (ESEEDKFPVCIREAVSQVLKGYDWTLVPMPVRVNGSSKNKP) form a dimerization (DIM) region. The PQA stretch occupies residues 63-103 (ESEEDKFPVCIREAVSQVLKGYDWTLVPMPVRVNGSSKNKP). Serine 64 carries the post-translational modification Phosphoserine. The HMG box DNA-binding region spans 105-173 (VKRPMNAFMV…QHKKDHPDYK (69 aa)). The residue at position 211 (serine 211) is a Phosphoserine. Residues 224–307 (PGEHSGQSQG…LPPNGHPGVP (84 aa)) form a transactivation domain (TAM) region. Short sequence motifs (9aaTAD) lie at residues 275-284 (IGELSSDVIS) and 290-298 (DVNEFDQYL). A disordered region spans residues 335–429 (WMSKQQAPPP…PFNLPHYNPS (95 aa)). Over residues 341 to 369 (APPPPPQQPPQAPQAPQAPPQQQAPPQPQ) the composition is skewed to pro residues. A compositionally biased stretch (polar residues) spans 378–420 (HTLTTLSSEPGQSQRTHIKTEQLSPSHYSEQQQHSPQQISYSP). The segment at 392–507 (RTHIKTEQLS…QPVYTQLTRP (116 aa)) is transactivation domain (TAC). A Glycyl lysine isopeptide (Lys-Gly) (interchain with G-Cter in ubiquitin) cross-link involves residue lysine 396. Positions 458–466 (SGLYSTFTY) match the 9aaTAD 3 motif. The disordered stretch occupies residues 477–507 (PIADTSGVPSIPQTHSPQHWEQPVYTQLTRP). Residues 483-507 (GVPSIPQTHSPQHWEQPVYTQLTRP) are compositionally biased toward polar residues.

In terms of assembly, homodimer; homodimerization is required for activity. Interacts (via C-terminus) with ZNF219; forming a complex that binds to the COL2A1 promoter and activates COL2A1 expression. Interacts with DDRGK1. Interacts with EP300/p300. Interacts with beta-catenin (CTNNB1); inhibiting CTNNB1 activity by competing with the binding sites of TCF/LEF within CTNNB1. Post-translationally, acetylated; acetylation impairs nuclear localization and ability to transactivate expression of target genes. Deacetylated by SIRT1. In terms of processing, phosphorylation at Ser-64 and Ser-211 by PKA increases transcriptional activity and may help delay chondrocyte maturation downstream of PTHLH/PTHrP signaling. Phosphorylation at either Ser-64 or Ser-211 is required for sumoylation, but phosphorylation is not dependent on sumoylation. Phosphorylated on tyrosine residues; tyrosine dephosphorylation by PTPN11/SHP2 blocks SOX9 phosphorylation by PKA and subsequent SUMOylation. Sumoylated; phosphorylation at either Ser-64 or Ser-211 is required for sumoylation. Sumoylation is induced by BMP signaling pathway. Post-translationally, ubiquitinated; ubiquitination leads to proteasomal degradation and is negatively regulated by DDRGK1.

It localises to the nucleus. Transcription factor that plays a key role in chondrocytes differentiation and skeletal development. Specifically binds the 5'-ACAAAG-3' DNA motif present in enhancers and super-enhancers and promotes expression of genes important for chondrogenesis, including cartilage matrix protein-coding genes COL2A1, COL4A2, COL9A1, COL11A2 and ACAN, SOX5 and SOX6. Also binds to some promoter regions. Plays a central role in successive steps of chondrocyte differentiation. Absolutely required for precartilaginous condensation, the first step in chondrogenesis during which skeletal progenitors differentiate into prechondrocytes. Together with SOX5 and SOX6, required for overt chondrogenesis when condensed prechondrocytes differentiate into early stage chondrocytes, the second step in chondrogenesis. Later, required to direct hypertrophic maturation and block osteoblast differentiation of growth plate chondrocytes: maintains chondrocyte columnar proliferation, delays prehypertrophy and then prevents osteoblastic differentiation of chondrocytes by lowering beta-catenin (CTNNB1) signaling and RUNX2 expression. Also required for chondrocyte hypertrophy, both indirectly, by keeping the lineage fate of chondrocytes, and directly, by remaining present in upper hypertrophic cells and transactivating COL10A1 along with MEF2C. Low lipid levels are the main nutritional determinant for chondrogenic commitment of skeletal progenitor cells: when lipids levels are low, FOXO (FOXO1 and FOXO3) transcription factors promote expression of SOX9, which induces chondrogenic commitment and suppresses fatty acid oxidation. Mechanistically, helps, but is not required, to remove epigenetic signatures of transcriptional repression and deposit active promoter and enhancer marks at chondrocyte-specific genes. Acts in cooperation with the Hedgehog pathway-dependent GLI (GLI1 and GLI3) transcription factors. In addition to cartilage development, also acts as a regulator of proliferation and differentiation in epithelial stem/progenitor cells: involved in the lung epithelium during branching morphogenesis, by balancing proliferation and differentiation and regulating the extracellular matrix. Controls epithelial branching during kidney development. This chain is Transcription factor SOX-9, found in Rattus norvegicus (Rat).